We begin with the raw amino-acid sequence, 167 residues long: Peptide deformylase (167 aa).

Positions 91 and 133 each coordinate Fe cation. Glu-134 is a catalytic residue. A Fe cation-binding site is contributed by His-137.

The protein belongs to the polypeptide deformylase family. Fe(2+) is required as a cofactor.

The enzyme catalyses N-terminal N-formyl-L-methionyl-[peptide] + H2O = N-terminal L-methionyl-[peptide] + formate. Removes the formyl group from the N-terminal Met of newly synthesized proteins. Requires at least a dipeptide for an efficient rate of reaction. N-terminal L-methionine is a prerequisite for activity but the enzyme has broad specificity at other positions. The polypeptide is Peptide deformylase (Chromobacterium violaceum (strain ATCC 12472 / DSM 30191 / JCM 1249 / CCUG 213 / NBRC 12614 / NCIMB 9131 / NCTC 9757 / MK)).